Here is a 305-residue protein sequence, read N- to C-terminus: Lipoyl synthase (305 aa).

[4Fe-4S] cluster contacts are provided by Cys41, Cys46, Cys52, Cys68, Cys72, Cys75, and Ser281. One can recognise a Radical SAM core domain in the interval 54–270; it reads GARRTATFMI…RKVAMDKGFK (217 aa). The span at 283–298 shows a compositional bias: basic and acidic residues; the sequence is HADEQVNEAAKEKQRQ. Residues 283-305 form a disordered region; sequence HADEQVNEAAKEKQRQGEAQLNS.

The protein belongs to the radical SAM superfamily. Lipoyl synthase family. It depends on [4Fe-4S] cluster as a cofactor.

It localises to the cytoplasm. The catalysed reaction is [[Fe-S] cluster scaffold protein carrying a second [4Fe-4S](2+) cluster] + N(6)-octanoyl-L-lysyl-[protein] + 2 oxidized [2Fe-2S]-[ferredoxin] + 2 S-adenosyl-L-methionine + 4 H(+) = [[Fe-S] cluster scaffold protein] + N(6)-[(R)-dihydrolipoyl]-L-lysyl-[protein] + 4 Fe(3+) + 2 hydrogen sulfide + 2 5'-deoxyadenosine + 2 L-methionine + 2 reduced [2Fe-2S]-[ferredoxin]. It participates in protein modification; protein lipoylation via endogenous pathway; protein N(6)-(lipoyl)lysine from octanoyl-[acyl-carrier-protein]. Its function is as follows. Catalyzes the radical-mediated insertion of two sulfur atoms into the C-6 and C-8 positions of the octanoyl moiety bound to the lipoyl domains of lipoate-dependent enzymes, thereby converting the octanoylated domains into lipoylated derivatives. This Staphylococcus aureus (strain Mu3 / ATCC 700698) protein is Lipoyl synthase.